Reading from the N-terminus, the 332-residue chain is Hygromycin-B 7''-O-kinase (332 aa).

Residue Asp-223 is the Proton acceptor of the active site.

It belongs to the aminoglycoside phosphotransferase family.

It carries out the reaction hygromycin B + ATP = 7''-O-phosphohygromycin B + ADP + H(+). Its function is as follows. The aminoglycoside phosphotransferases achieve inactivation of their antibiotic substrates by phosphorylation. This chain is Hygromycin-B 7''-O-kinase (hyg), found in Streptomyces hygroscopicus.